Reading from the N-terminus, the 1505-residue chain is Probable RNA-directed RNA polymerase (1505 aa).

Belongs to the totiviridae RNA-directed RNA polymerase family.

It carries out the reaction RNA(n) + a ribonucleoside 5'-triphosphate = RNA(n+1) + diphosphate. In terms of biological role, RNA-dependent RNA polymerase which replicates the viral genome. Catalyzes the transcription of fully conservative plus-strand genomic RNAs that are extruded from the virion into the cytoplasm where they function as mRNAs for translation of viral proteins and also as substrates for encapsidation to form new virions. Once encapsidated, the positive strand is converted to dsRNA by the RNA-directed RNA polymerase. Displays ssRNA-binding activity. This chain is Probable RNA-directed RNA polymerase (gag-pol), found in Saccharomyces cerevisiae virus L-A (ScV-L-A).